The following is a 204-amino-acid chain: MDPLSPPLCTLPPGPEPPRFVCYCEGEESGEGDRGGFNLYVTDAAELWSTCFTPDSLAALKARFGLSAAEDITPRFRAACEQQAVALTLQEDRASLTLSGGPSALAFDLSKVPGPEAAPRLRALTLGLAKRVWSLERRLAAAEETAVSPRKSPRPAGPQLFLPDPDPQRGGPGPGVRRRCPGESLINPGFKSKKPAGGVDFDET.

Positions 37-79 constitute a PISA domain; sequence FNLYVTDAAELWSTCFTPDSLAALKARFGLSAAEDITPRFRAA. S134 carries the phosphoserine modification. Positions 143 to 204 are disordered; that stretch reads EETAVSPRKS…PAGGVDFDET (62 aa). Phosphothreonine is present on T145. Phosphoserine is present on residues S148 and S152. Residues 171-204 form a mediates interaction with XRCC5/Ku80 and XRCC6/Ku70 and association with the non-homologous end joining core complex region; it reads GPGPGVRRRCPGESLINPGFKSKKPAGGVDFDET. An XLM motif is present at residues 190–204; that stretch reads FKSKKPAGGVDFDET.

It belongs to the XRCC4-XLF family. PAXX subfamily. As to quaternary structure, homodimer. Interacts with the DNA-bound XRCC5/Ku80 and XRCC6/Ku70 heterodimer (Ku complex); the interaction is direct. Associated component of the non-homologous end joining (NHEJ) complex, composed of the core proteins PRKDC, LIG4, XRCC4, XRCC6/Ku70, XRCC5/Ku86 and NHEJ1/XLF. Interacts with POLL (DNA polymerase lambda); promoting POLL recruitment to double-strand breaks (DSBs) and stimulation of the end-filling activity of POLL. In terms of processing, phosphorylation may inhibit interaction with the DNA-bound XRCC5/Ku80 and XRCC6/Ku70 heterodimer (Ku complex).

The protein localises to the nucleus. It localises to the chromosome. The protein resides in the cytoplasm. In terms of biological role, non-essential DNA repair protein involved in DNA non-homologous end joining (NHEJ); participates in double-strand break (DSB) repair and V(D)J recombination. May act as a scaffold required for accumulation of the Ku heterodimer, composed of XRCC5/Ku80 and XRCC6/Ku70, at double-strand break sites and promote the assembly and/or stability of the NHEJ machinery. Involved in NHEJ by promoting the ligation of blunt-ended DNA ends. Together with NHEJ1/XLF, collaborates with DNA polymerase lambda (POLL) to promote joining of non-cohesive DNA ends. Constitutes a non-essential component of classical NHEJ: has a complementary but distinct function with NHEJ1/XLF in DNA repair. Able to restrict infection by herpesvirus 1 (HSV-1) via an unknown mechanism. The polypeptide is Protein PAXX (Homo sapiens (Human)).